Consider the following 826-residue polypeptide: Copper-transporting ATPase 1 (826 aa).

2 HMA domains span residues 15-80 and 82-147; these read APTD…YEPK and IIQE…YDVR. Positions 26, 29, 93, and 96 each coordinate Cu cation. 6 consecutive transmembrane segments (helical) span residues 172–192, 209–229, 246–266, 270–290, 429–449, and 457–477; these read LVILSAVLTLPLFLVEMGSHF, NLYIQFALATAVLFGPGLRFF, LVVLGTTAAWGYSVVATFASG, SGTANVYYEAAAVIVTLILLG, AWFVPAVILVAVLTFAAWYVF, and FALVNAVAVLIIACPCAMGLA. The 4-aspartylphosphate intermediate role is filled by Asp514. Residues Asp713 and Asp717 each contribute to the Mg(2+) site. 2 helical membrane passes run 772-792 and 795-815; these read FWAFAYNVSLVPVAAGVLYPL and TLLSPILAAAAMAMSSVFVLG.

Belongs to the cation transport ATPase (P-type) (TC 3.A.3) family. Type IB subfamily.

The protein resides in the cell membrane. It catalyses the reaction Cu(2+)(in) + ATP + H2O = Cu(2+)(out) + ADP + phosphate + H(+). Functionally, involved in copper transport. This chain is Copper-transporting ATPase 1 (actP1), found in Rhizobium meliloti (strain 1021) (Ensifer meliloti).